A 323-amino-acid polypeptide reads, in one-letter code: uncharacterized protein (323 aa).

Residues 1 to 45 form the signal peptide; sequence MLATLSQIRAWSTEHLIDAAGYWTETADRWEDVFLQMRNQAHAIA. The disordered stretch occupies residues 186–227; sequence FKQDGPTPPPPGAPHPSGGADGPYSDPITSMMLPPAGTEAPV. 2 helical membrane-spanning segments follow: residues 269–289 and 290–310; these read SAEWTAAVAGFAGSSAGVVGT and ALAIPAGPADWALLGAALLGV.

It is found in the cell membrane. This is an uncharacterized protein from Mycobacterium tuberculosis (strain CDC 1551 / Oshkosh).